The following is a 100-amino-acid chain: uncharacterized protein (100 aa).

3 helical membrane-spanning segments follow: residues 7–28 (TLIG…LLSL), 38–60 (AQLS…ILII), and 65–87 (LSAL…ANGV).

Its subcellular location is the cell membrane. This is an uncharacterized protein from Archaeoglobus fulgidus (strain ATCC 49558 / DSM 4304 / JCM 9628 / NBRC 100126 / VC-16).